The sequence spans 76 residues: Putative snRNP Sm-like protein (76 aa).

The region spanning 4–76 (RPLDVIHKSL…VLAISPTEEG (73 aa)) is the Sm domain.

The protein belongs to the snRNP Sm proteins family.

The protein is Putative snRNP Sm-like protein of Pyrococcus furiosus (strain ATCC 43587 / DSM 3638 / JCM 8422 / Vc1).